A 227-amino-acid polypeptide reads, in one-letter code: Cytochrome c oxidase subunit 2 (227 aa).

The Mitochondrial intermembrane portion of the chain corresponds to 1 to 14 (MAYPFQLGLQDASS). A helical membrane pass occupies residues 15 to 45 (PIMEELMNFHDHTLMIVFLISSLVLYLMALM). Topologically, residues 46 to 59 (LSTKLIHTSTMDAQ) are mitochondrial matrix. The helical transmembrane segment at 60–87 (EVETIWTILPAIILIMIALPSLRILYMM) threads the bilayer. Topologically, residues 88-227 (DEINNPILTV…LFENWSMSMT (140 aa)) are mitochondrial intermembrane. Positions 161, 196, 198, 200, 204, and 207 each coordinate Cu cation. Position 198 (glutamate 198) interacts with Mg(2+).

This sequence belongs to the cytochrome c oxidase subunit 2 family. As to quaternary structure, component of the cytochrome c oxidase (complex IV, CIV), a multisubunit enzyme composed of 14 subunits. The complex is composed of a catalytic core of 3 subunits MT-CO1, MT-CO2 and MT-CO3, encoded in the mitochondrial DNA, and 11 supernumerary subunits COX4I, COX5A, COX5B, COX6A, COX6B, COX6C, COX7A, COX7B, COX7C, COX8 and NDUFA4, which are encoded in the nuclear genome. The complex exists as a monomer or a dimer and forms supercomplexes (SCs) in the inner mitochondrial membrane with NADH-ubiquinone oxidoreductase (complex I, CI) and ubiquinol-cytochrome c oxidoreductase (cytochrome b-c1 complex, complex III, CIII), resulting in different assemblies (supercomplex SCI(1)III(2)IV(1) and megacomplex MCI(2)III(2)IV(2)). Found in a complex with TMEM177, COA6, COX18, COX20, SCO1 and SCO2. Interacts with TMEM177 in a COX20-dependent manner. Interacts with COX20. Interacts with COX16. It depends on Cu cation as a cofactor.

It localises to the mitochondrion inner membrane. The catalysed reaction is 4 Fe(II)-[cytochrome c] + O2 + 8 H(+)(in) = 4 Fe(III)-[cytochrome c] + 2 H2O + 4 H(+)(out). Functionally, component of the cytochrome c oxidase, the last enzyme in the mitochondrial electron transport chain which drives oxidative phosphorylation. The respiratory chain contains 3 multisubunit complexes succinate dehydrogenase (complex II, CII), ubiquinol-cytochrome c oxidoreductase (cytochrome b-c1 complex, complex III, CIII) and cytochrome c oxidase (complex IV, CIV), that cooperate to transfer electrons derived from NADH and succinate to molecular oxygen, creating an electrochemical gradient over the inner membrane that drives transmembrane transport and the ATP synthase. Cytochrome c oxidase is the component of the respiratory chain that catalyzes the reduction of oxygen to water. Electrons originating from reduced cytochrome c in the intermembrane space (IMS) are transferred via the dinuclear copper A center (CU(A)) of subunit 2 and heme A of subunit 1 to the active site in subunit 1, a binuclear center (BNC) formed by heme A3 and copper B (CU(B)). The BNC reduces molecular oxygen to 2 water molecules using 4 electrons from cytochrome c in the IMS and 4 protons from the mitochondrial matrix. The polypeptide is Cytochrome c oxidase subunit 2 (MT-CO2) (Gerbillus gerbillus (Lesser Egyptian gerbil)).